A 358-amino-acid polypeptide reads, in one-letter code: MKQIQVDLGVRSYPIVIGRNLMSCGEHFARFLQDKKILIVTNETVAPLYLEKLELQLSSFDCVEPVILPDGEQYKTLAQMDSIFTSLLQQNSGRDTVLIALGGGVIGDMTGFAAASYQRGIDFIQIPTTLLAQVDSSVGGKTAVNHPLGKNMIGAFYQPKLVVIDTDCLSTLPAKEFSAGMAEVIKYGIIWDSEFFSWLENNVERLKTLDDEALAYAIGRCCEIKADVVAEDETEQGVRALLNLGHTFGHAIEAEMGYGVWLHGEAVAAGTVLAASTASRMGLIDGSIVCRITKLFEAFDLPVSPPDSMNFEQFIKHMRRDKKVLKGQVRLVLPEAMGQAGVYSEVSDELLEDVIRCA.

Residues 70 to 75 (DGEQYK), 104 to 108 (GVIGD), 128 to 129 (TT), K141, K150, and 168 to 171 (CLST) each bind NAD(+). Residues E183, H246, and H263 each coordinate Zn(2+).

The protein belongs to the sugar phosphate cyclases superfamily. Dehydroquinate synthase family. It depends on Co(2+) as a cofactor. Requires Zn(2+) as cofactor. NAD(+) serves as cofactor.

The protein localises to the cytoplasm. The enzyme catalyses 7-phospho-2-dehydro-3-deoxy-D-arabino-heptonate = 3-dehydroquinate + phosphate. It participates in metabolic intermediate biosynthesis; chorismate biosynthesis; chorismate from D-erythrose 4-phosphate and phosphoenolpyruvate: step 2/7. Functionally, catalyzes the conversion of 3-deoxy-D-arabino-heptulosonate 7-phosphate (DAHP) to dehydroquinate (DHQ). The protein is 3-dehydroquinate synthase of Shewanella woodyi (strain ATCC 51908 / MS32).